We begin with the raw amino-acid sequence, 1362 residues long: DNA-directed RNA polymerase subunit beta' (1362 aa).

A compositionally biased stretch (basic residues) spans 1–14 (MTSSSKSRKSKSSK). The disordered stretch occupies residues 1-39 (MTSSSKSRKSKSSKASKAAKEAPVSASRPLSKTPPPFRN). Over residues 15-27 (ASKAAKEAPVSAS) the composition is skewed to low complexity. Positions 248, 315, 322, and 325 each coordinate Zn(2+). The disordered stretch occupies residues 1316-1336 (TRHNIDPSASNFAAFTRPDAD).

The protein belongs to the RNA polymerase beta' chain family. RpoC2 subfamily. In cyanobacteria the RNAP catalytic core is composed of 2 alpha, 1 beta, 1 beta', 1 gamma and 1 omega subunit. When a sigma factor is associated with the core the holoenzyme is formed, which can initiate transcription. Requires Zn(2+) as cofactor.

The catalysed reaction is RNA(n) + a ribonucleoside 5'-triphosphate = RNA(n+1) + diphosphate. In terms of biological role, DNA-dependent RNA polymerase catalyzes the transcription of DNA into RNA using the four ribonucleoside triphosphates as substrates. In Synechococcus sp. (strain CC9605), this protein is DNA-directed RNA polymerase subunit beta'.